A 311-amino-acid chain; its full sequence is Coproporphyrin III ferrochelatase 1 (311 aa).

Residues Tyr12, Arg29, 45–46 (RY), Ser53, and Tyr124 each bind Fe-coproporphyrin III. 2 residues coordinate Fe(2+): His182 and Glu263.

It belongs to the ferrochelatase family.

The protein resides in the cytoplasm. It catalyses the reaction Fe-coproporphyrin III + 2 H(+) = coproporphyrin III + Fe(2+). The protein operates within porphyrin-containing compound metabolism; protoheme biosynthesis. In terms of biological role, involved in coproporphyrin-dependent heme b biosynthesis. Catalyzes the insertion of ferrous iron into coproporphyrin III to form Fe-coproporphyrin III. In Bacillus cereus (strain ATCC 10987 / NRS 248), this protein is Coproporphyrin III ferrochelatase 1.